A 212-amino-acid polypeptide reads, in one-letter code: Nucleoside triphosphate pyrophosphatase (212 aa).

The active-site Proton acceptor is the D79.

Belongs to the Maf family. A divalent metal cation is required as a cofactor.

The protein resides in the cytoplasm. It carries out the reaction a ribonucleoside 5'-triphosphate + H2O = a ribonucleoside 5'-phosphate + diphosphate + H(+). The catalysed reaction is a 2'-deoxyribonucleoside 5'-triphosphate + H2O = a 2'-deoxyribonucleoside 5'-phosphate + diphosphate + H(+). Functionally, nucleoside triphosphate pyrophosphatase. May have a dual role in cell division arrest and in preventing the incorporation of modified nucleotides into cellular nucleic acids. The chain is Nucleoside triphosphate pyrophosphatase from Nocardia farcinica (strain IFM 10152).